We begin with the raw amino-acid sequence, 314 residues long: Putative S-adenosyl-L-methionine-dependent methyltransferase MAP_4191c (314 aa).

S-adenosyl-L-methionine contacts are provided by residues Asp138 and 167 to 168 (DL).

The protein belongs to the UPF0677 family.

In terms of biological role, exhibits S-adenosyl-L-methionine-dependent methyltransferase activity. This chain is Putative S-adenosyl-L-methionine-dependent methyltransferase MAP_4191c, found in Mycolicibacterium paratuberculosis (strain ATCC BAA-968 / K-10) (Mycobacterium paratuberculosis).